Reading from the N-terminus, the 129-residue chain is uncharacterized protein (129 aa).

The disordered stretch occupies residues 23–101; the sequence is KASTSSESCQ…TAATRTTSKK (79 aa). Basic and acidic residues-rich tracts occupy residues 31–40 and 67–80; these read CQRRGVRDDT and EGDR…EKEP.

This is an uncharacterized protein from Ictaluridae (bullhead catfishes).